The primary structure comprises 469 residues: MTVKTRFAPSPTGFLHVGGARTALYSWLHARANQGEFVLRIEDTDLERSTQEAVDAILEGMEWLNLNWDEGPYYQTKRFDRYNEIIDQMLKAGTAYKCYCSKERLEAVREEQAAKGERQKYDGCCRGAAPRAEGEPHVVRFLNPQGGSVVFDDHVRGRIEIANEELDDLIIRRTDGSPTYNFCVVVDDWDMGITHVVRGEDHINNTPRQINILKALGAPIPEYAHVSMILGDDGAKLSKRHGAVSVMQYRDDGYLPEALLNYLVRLGWSHGDQEIFSMDELVEFFRLDDINKAASAFNSEKLLWLNQHYIKALDPEYVAKHLEWHMKDQGIDTSNGPALADVVTALSERAKTLKELAASSRYFYEDFEEFDADQAKKHLRGVALEPLKLVQQKLAALTEWTREAIHQAIEETATELEVGMGKVGMPLRVAVTGAGQSPGLDITLELIGKARSEQRISKAVDFVADRINS.

Positions 9 to 19 (PSPTGFLHVGG) match the 'HIGH' region motif. Residues 236–240 (KLSKR) carry the 'KMSKS' region motif. Lysine 239 provides a ligand contact to ATP.

Belongs to the class-I aminoacyl-tRNA synthetase family. Glutamate--tRNA ligase type 1 subfamily. As to quaternary structure, monomer.

The protein localises to the cytoplasm. The catalysed reaction is tRNA(Glu) + L-glutamate + ATP = L-glutamyl-tRNA(Glu) + AMP + diphosphate. In terms of biological role, catalyzes the attachment of glutamate to tRNA(Glu) in a two-step reaction: glutamate is first activated by ATP to form Glu-AMP and then transferred to the acceptor end of tRNA(Glu). The protein is Glutamate--tRNA ligase of Shewanella amazonensis (strain ATCC BAA-1098 / SB2B).